The sequence spans 359 residues: DNA integrity scanning protein DisA (359 aa).

Residues 10 to 148 form the DAC domain; the sequence is ELDLLDIVQF…GNRRYTLKDI (139 aa). ATP contacts are provided by residues G77, L95, and 108-112; that span reads MRHRT.

The protein belongs to the DisA family. As to quaternary structure, homooctamer. Requires Mg(2+) as cofactor.

It carries out the reaction 2 ATP = 3',3'-c-di-AMP + 2 diphosphate. Functionally, participates in a DNA-damage check-point that is active prior to asymmetric division when DNA is damaged. DisA forms globular foci that rapidly scan along the chromosomes during sporulation, searching for lesions. When a lesion is present, DisA pauses at the lesion site. This triggers a cellular response that culminates in a temporary block in sporulation initiation. In terms of biological role, also has diadenylate cyclase activity, catalyzing the condensation of 2 ATP molecules into cyclic di-AMP (c-di-AMP). c-di-AMP acts as a signaling molecule that couples DNA integrity with progression of sporulation. The rise in c-di-AMP level generated by DisA while scanning the chromosome, operates as a positive signal that advances sporulation; upon encountering a lesion, the DisA focus arrests at the damaged site and halts c-di-AMP synthesis. This chain is DNA integrity scanning protein DisA, found in Bacillus pumilus (strain SAFR-032).